A 122-amino-acid chain; its full sequence is Large ribosomal subunit protein uL14 (122 aa).

Belongs to the universal ribosomal protein uL14 family. Part of the 50S ribosomal subunit. Forms a cluster with proteins L3 and L19. In the 70S ribosome, L14 and L19 interact and together make contacts with the 16S rRNA in bridges B5 and B8.

Its function is as follows. Binds to 23S rRNA. Forms part of two intersubunit bridges in the 70S ribosome. In Desulforamulus reducens (strain ATCC BAA-1160 / DSM 100696 / MI-1) (Desulfotomaculum reducens), this protein is Large ribosomal subunit protein uL14.